Reading from the N-terminus, the 232-residue chain is 5'-methylthioadenosine/S-adenosylhomocysteine nucleosidase (232 aa).

Residue Glu12 is the Proton acceptor of the active site. Substrate is bound by residues Gly78, Ile152, and 173–174; that span reads ME. Residue Asp197 is the Proton donor of the active site.

The protein belongs to the PNP/UDP phosphorylase family. MtnN subfamily. As to quaternary structure, homodimer.

The enzyme catalyses S-adenosyl-L-homocysteine + H2O = S-(5-deoxy-D-ribos-5-yl)-L-homocysteine + adenine. It catalyses the reaction S-methyl-5'-thioadenosine + H2O = 5-(methylsulfanyl)-D-ribose + adenine. The catalysed reaction is 5'-deoxyadenosine + H2O = 5-deoxy-D-ribose + adenine. Its pathway is amino-acid biosynthesis; L-methionine biosynthesis via salvage pathway; S-methyl-5-thio-alpha-D-ribose 1-phosphate from S-methyl-5'-thioadenosine (hydrolase route): step 1/2. In terms of biological role, catalyzes the irreversible cleavage of the glycosidic bond in both 5'-methylthioadenosine (MTA) and S-adenosylhomocysteine (SAH/AdoHcy) to adenine and the corresponding thioribose, 5'-methylthioribose and S-ribosylhomocysteine, respectively. Also cleaves 5'-deoxyadenosine, a toxic by-product of radical S-adenosylmethionine (SAM) enzymes, into 5-deoxyribose and adenine. Thus, is required for in vivo function of the radical SAM enzymes biotin synthase and lipoic acid synthase, that are inhibited by 5'-deoxyadenosine accumulation. In Salmonella paratyphi B (strain ATCC BAA-1250 / SPB7), this protein is 5'-methylthioadenosine/S-adenosylhomocysteine nucleosidase.